We begin with the raw amino-acid sequence, 364 residues long: Homeobox protein KNOX3 (364 aa).

Residues 13–49 (TAHGQHHSQLPWGSSPLSAVISPPPQQQQQHQQQSAG) form a disordered region. Positions 19–29 (HSQLPWGSSPL) are enriched in polar residues. One can recognise an ELK domain in the interval 246–266 (ELKHHLLKKYSGYLSSLKQEL). A DNA-binding region (homeobox; TALE-type) is located at residues 267 to 330 (SKKKKKGKLP…NQRKRHWKPT (64 aa)).

The protein belongs to the TALE/KNOX homeobox family. As to quaternary structure, binds DNA as a monomer. In terms of tissue distribution, the unit of inflorescence is the spikelet, which bears a fertile tract, the lemma, and the floret consisting of palea, two lodicules, three stamens and the pistil. The lemma is completed by the awn, an appendage homologous to the laminae of normal leaves. Expressed in the inflorescences and lemmas and at lower levels, in palea and vascular bundles.

The protein localises to the nucleus. In terms of biological role, may play a role in meristem formation and/or maintenance. Overexpression causes the hooded phenotype characterized by the appearance of an extra flower of inverse polarity on the lemma. Binds to the DNA sequence 5'-TGAC-3'. This chain is Homeobox protein KNOX3 (KNOX3), found in Hordeum vulgare (Barley).